The primary structure comprises 182 residues: Inorganic pyrophosphatase (182 aa).

Residues K30, R44, and Y56 each coordinate substrate. Positions 66, 71, and 103 each coordinate Mg(2+). A substrate-binding site is contributed by Y142.

Belongs to the PPase family. As to quaternary structure, homohexamer. It depends on Mg(2+) as a cofactor.

The protein resides in the cytoplasm. The enzyme catalyses diphosphate + H2O = 2 phosphate + H(+). Functionally, catalyzes the hydrolysis of inorganic pyrophosphate (PPi) forming two phosphate ions. This Buchnera aphidicola subsp. Acyrthosiphon pisum (strain APS) (Acyrthosiphon pisum symbiotic bacterium) protein is Inorganic pyrophosphatase.